Here is an 83-residue protein sequence, read N- to C-terminus: Small ribosomal subunit protein bS18 (83 aa).

This sequence belongs to the bacterial ribosomal protein bS18 family. Part of the 30S ribosomal subunit. Forms a tight heterodimer with protein bS6.

Functionally, binds as a heterodimer with protein bS6 to the central domain of the 16S rRNA, where it helps stabilize the platform of the 30S subunit. This Desulfosudis oleivorans (strain DSM 6200 / JCM 39069 / Hxd3) (Desulfococcus oleovorans) protein is Small ribosomal subunit protein bS18.